The primary structure comprises 248 residues: 2,3-bisphosphoglycerate-dependent phosphoglycerate mutase (248 aa).

Residues 8–15 (RHGESLWN), 21–22 (TG), Arg-60, 87–90 (ERHY), Lys-98, 114–115 (RR), and 183–184 (GN) contribute to the substrate site. His-9 acts as the Tele-phosphohistidine intermediate in catalysis. The active-site Proton donor/acceptor is the Glu-87.

This sequence belongs to the phosphoglycerate mutase family. BPG-dependent PGAM subfamily.

The enzyme catalyses (2R)-2-phosphoglycerate = (2R)-3-phosphoglycerate. The protein operates within carbohydrate degradation; glycolysis; pyruvate from D-glyceraldehyde 3-phosphate: step 3/5. Functionally, catalyzes the interconversion of 2-phosphoglycerate and 3-phosphoglycerate. The polypeptide is 2,3-bisphosphoglycerate-dependent phosphoglycerate mutase (Methanospirillum hungatei JF-1 (strain ATCC 27890 / DSM 864 / NBRC 100397 / JF-1)).